We begin with the raw amino-acid sequence, 675 residues long: Heat shock 70 kDa protein, mitochondrial (675 aa).

Residues 1–52 (MAATLLRSLQRRNLSSSSVSAFRSLTGSTKTSYATHKLASLTRPFSSRPAGN) constitute a mitochondrion transit peptide. A disordered region spans residues 639–675 (VSKIGQHMSGGSSGGPSEGGSQGGEQAPEAEYEEVKK). Positions 649 to 661 (GSSGGPSEGGSQG) are enriched in gly residues. The span at 666 to 675 (PEAEYEEVKK) shows a compositional bias: acidic residues.

Belongs to the heat shock protein 70 family.

It is found in the mitochondrion. This Pisum sativum (Garden pea) protein is Heat shock 70 kDa protein, mitochondrial (HSP1).